A 360-amino-acid polypeptide reads, in one-letter code: Peptide chain release factor 1 (360 aa).

Q235 bears the N5-methylglutamine mark. The tract at residues 281–310 (AERQRQDAAQAESRRLQVGSGDRSQRIRTY) is disordered.

Belongs to the prokaryotic/mitochondrial release factor family. Post-translationally, methylated by PrmC. Methylation increases the termination efficiency of RF1.

The protein resides in the cytoplasm. Its function is as follows. Peptide chain release factor 1 directs the termination of translation in response to the peptide chain termination codons UAG and UAA. This Stenotrophomonas maltophilia (strain R551-3) protein is Peptide chain release factor 1.